A 424-amino-acid chain; its full sequence is Gamma-glutamyl phosphate reductase (424 aa).

Residues 1 to 27 are disordered; it reads MSVEAQSRSGAVDTQEPADLREQVHSA.

The protein belongs to the gamma-glutamyl phosphate reductase family.

The protein resides in the cytoplasm. It carries out the reaction L-glutamate 5-semialdehyde + phosphate + NADP(+) = L-glutamyl 5-phosphate + NADPH + H(+). It functions in the pathway amino-acid biosynthesis; L-proline biosynthesis; L-glutamate 5-semialdehyde from L-glutamate: step 2/2. Catalyzes the NADPH-dependent reduction of L-glutamate 5-phosphate into L-glutamate 5-semialdehyde and phosphate. The product spontaneously undergoes cyclization to form 1-pyrroline-5-carboxylate. This Mycolicibacterium smegmatis (strain ATCC 700084 / mc(2)155) (Mycobacterium smegmatis) protein is Gamma-glutamyl phosphate reductase.